The primary structure comprises 285 residues: Glycine--tRNA ligase alpha subunit (285 aa).

Belongs to the class-II aminoacyl-tRNA synthetase family. Tetramer of two alpha and two beta subunits.

The protein resides in the cytoplasm. The catalysed reaction is tRNA(Gly) + glycine + ATP = glycyl-tRNA(Gly) + AMP + diphosphate. This Thermodesulfovibrio yellowstonii (strain ATCC 51303 / DSM 11347 / YP87) protein is Glycine--tRNA ligase alpha subunit.